A 72-amino-acid polypeptide reads, in one-letter code: Large ribosomal subunit protein bL28 (72 aa).

The protein belongs to the bacterial ribosomal protein bL28 family.

The sequence is that of Large ribosomal subunit protein bL28 from Chlorobaculum tepidum (strain ATCC 49652 / DSM 12025 / NBRC 103806 / TLS) (Chlorobium tepidum).